A 317-amino-acid chain; its full sequence is MGAKVKVAVVQAEPVWFNLQETVKRVNELIESAYNKGAELIAFPEVFVPGYPTWIWTNAADLDRNLMYTKNSLTYDSPEFISIIETVKKYPIHVVLGFSEKDQGSLYISQCIIDNTGEIVLKRRKFKPTHVERVIWGDTADSNMKSVVTLNFKEAGPVEVGCLSCWEHMQPLLYYNSAAQHEKIHIGSWPALNDKDLGVYCFTKAGFHGLARAYANQVQSFYLFTSILGQRIQEALPDVKLSPYFEKGAGCGAVFAPDGSQITEDHPDDFDGVIISELDMDKILLQKNLVDIVGHYARPDMVSLSHNRPNTEFVNRK.

One can recognise a CN hydrolase domain in the interval 5–280; it reads VKVAVVQAEP…DGVIISELDM (276 aa). Glu-45 acts as the Proton acceptor in catalysis. The active site involves Lys-125. Residue Cys-165 is the Nucleophile of the active site.

This sequence belongs to the carbon-nitrogen hydrolase superfamily. Nitrilase family.

It catalyses the reaction a nitrile + 2 H2O = a carboxylate + NH4(+). Nitrilase that hydrolyzes preferentially 4-cyanopyridine. Is also able to hydrolyze some aliphatic nitriles, such as phenylacetonitrile. This Meyerozyma guilliermondii (strain ATCC 6260 / CBS 566 / DSM 6381 / JCM 1539 / NBRC 10279 / NRRL Y-324) (Yeast) protein is Nitrilase.